Reading from the N-terminus, the 153-residue chain is Small ribosomal subunit protein uS7c (153 aa).

It belongs to the universal ribosomal protein uS7 family. Part of the 30S ribosomal subunit.

The protein localises to the plastid. Its function is as follows. One of the primary rRNA binding proteins, it binds directly to 16S rRNA where it nucleates assembly of the head domain of the 30S subunit. The protein is Small ribosomal subunit protein uS7c (rps7) of Helicosporidium sp. subsp. Simulium jonesii (Green alga).